Reading from the N-terminus, the 206-residue chain is Large ribosomal subunit protein uL4 (206 aa).

The disordered stretch occupies residues 45-85 (QGNRAQKDREQVKHTTKKPWRQKGTGRARAGMSSSPLWRGG). A compositionally biased stretch (basic residues) spans 58-70 (HTTKKPWRQKGTG).

This sequence belongs to the universal ribosomal protein uL4 family. As to quaternary structure, part of the 50S ribosomal subunit.

Its function is as follows. One of the primary rRNA binding proteins, this protein initially binds near the 5'-end of the 23S rRNA. It is important during the early stages of 50S assembly. It makes multiple contacts with different domains of the 23S rRNA in the assembled 50S subunit and ribosome. Functionally, forms part of the polypeptide exit tunnel. This Burkholderia mallei (strain NCTC 10247) protein is Large ribosomal subunit protein uL4.